A 430-amino-acid chain; its full sequence is Na(+)/H(+) antiporter NhaA 2 (430 aa).

Transmembrane regions (helical) follow at residues 11–31, 60–80, 97–117, 127–147, 181–201, 215–235, 288–308, 309–329, 356–376, and 393–413; these read FVHG…IAFI, LSLE…LVGL, VALA…LYTA, GWGV…ALLG, LNLT…YAGW, VLLW…GVLL, HALH…TNAG, VPVA…GLLL, WGHM…SLFV, and GVLL…LLGI.

Belongs to the NhaA Na(+)/H(+) (TC 2.A.33) antiporter family.

The protein localises to the cell membrane. It carries out the reaction Na(+)(in) + 2 H(+)(out) = Na(+)(out) + 2 H(+)(in). In terms of biological role, na(+)/H(+) antiporter that extrudes sodium in exchange for external protons. This Deinococcus geothermalis (strain DSM 11300 / CIP 105573 / AG-3a) protein is Na(+)/H(+) antiporter NhaA 2.